Reading from the N-terminus, the 621-residue chain is DNA mismatch repair protein MutL (621 aa).

Belongs to the DNA mismatch repair MutL/HexB family.

This protein is involved in the repair of mismatches in DNA. It is required for dam-dependent methyl-directed DNA mismatch repair. May act as a 'molecular matchmaker', a protein that promotes the formation of a stable complex between two or more DNA-binding proteins in an ATP-dependent manner without itself being part of a final effector complex. This Petrotoga mobilis (strain DSM 10674 / SJ95) protein is DNA mismatch repair protein MutL.